We begin with the raw amino-acid sequence, 406 residues long: MEVYLVGGAVRDKLLGRPVKERDYVVVGTTPANLLAQGYRPVGKDFPVFLHPQTQEEYALARTERKTGPGYKGFEVDAAPDVTLEEDLQRRDLTINAIAEAADGSLLDPFGGQQDLARGILRHVSPAFAEDPVRILRAARFAARFNFKVAPETLALMEAMVTAGEADHLVPERVWRELERALGESYPRRFFEILRACGALARIFPEIECLFGVPQPRRYHPEIDTGIHTLKVLEIAAHLSSDTQVRFAALTHDLGKGQTPSHEWPHHYGHGERGVALVLTLCQRLRVPKAYQALAVQVARYHNLVHQAQELRPGTILKLLNRVDAFRRPSRFEQFLLACEADARGRSGLENRPYPQANQLRLAFRAAAAVTARPLVAAGLRGEAIAEQLQQQRIKAIKQAVHTERG.

ATP contacts are provided by Gly8 and Arg11. 2 residues coordinate CTP: Gly8 and Arg11. Residues Glu21 and Asp23 each contribute to the Mg(2+) site. Residues Arg91, Arg137, and Arg140 each contribute to the ATP site. Residues Arg91, Arg137, and Arg140 each contribute to the CTP site. The HD domain maps to 225–326 (TGIHTLKVLE…LKLLNRVDAF (102 aa)).

The protein belongs to the tRNA nucleotidyltransferase/poly(A) polymerase family. Bacterial CCA-adding enzyme type 1 subfamily. As to quaternary structure, monomer. Can also form homodimers and oligomers. Mg(2+) serves as cofactor. Ni(2+) is required as a cofactor.

The enzyme catalyses a tRNA precursor + 2 CTP + ATP = a tRNA with a 3' CCA end + 3 diphosphate. The catalysed reaction is a tRNA with a 3' CCA end + 2 CTP + ATP = a tRNA with a 3' CCACCA end + 3 diphosphate. In terms of biological role, catalyzes the addition and repair of the essential 3'-terminal CCA sequence in tRNAs without using a nucleic acid template. Adds these three nucleotides in the order of C, C, and A to the tRNA nucleotide-73, using CTP and ATP as substrates and producing inorganic pyrophosphate. tRNA 3'-terminal CCA addition is required both for tRNA processing and repair. Also involved in tRNA surveillance by mediating tandem CCA addition to generate a CCACCA at the 3' terminus of unstable tRNAs. While stable tRNAs receive only 3'-terminal CCA, unstable tRNAs are marked with CCACCA and rapidly degraded. The polypeptide is Multifunctional CCA protein (Nitrosococcus oceani (strain ATCC 19707 / BCRC 17464 / JCM 30415 / NCIMB 11848 / C-107)).